Consider the following 1515-residue polypeptide: DNA topoisomerase 2-binding protein 1 (1515 aa).

2 consecutive BRCT domains span residues 101-189 (VYNM…KYTD) and 195-284 (FKCP…IYKA). Thr-298 carries the phosphothreonine modification. BRCT domains lie at 353 to 443 (APED…SYIH), 551 to 636 (REEG…SNPL), and 644 to 741 (SGVT…HFLV). Positions 759-893 (VSSNPDLPAH…TDSHSASPQL (135 aa)) are interaction with CIP2A. Residue Thr-782 is modified to Phosphothreonine. Residues 799 to 826 (SQQRGQDPTFPPVRQPLTKEPSLHLDTP) are disordered. At Thr-851 the chain carries Phosphothreonine. A phosphoserine mark is found at Ser-862, Ser-863, Ser-866, Ser-888, and Ser-890. Residues 880 to 891 (SSRNTDSHSASP) show a composition bias toward polar residues. The interval 880-901 (SSRNTDSHSASPQLKGAHLEEE) is disordered. One can recognise a BRCT 6 domain in the interval 902–993 (ETRKPLDSVV…KHLPESLYPH (92 aa)). The tract at residues 1020–1055 (VSASKDDGPDHLSVEGNETNTMGTNDKESPLLNGSG) is disordered. Positions 1023–1032 (SKDDGPDHLS) are enriched in basic and acidic residues. Thr-1064 bears the Phosphothreonine mark. Positions 1097-1116 (SRSSCNSASSTPDSARSVRS) are enriched in low complexity. 3 disordered regions span residues 1097–1119 (SRSS…SGRS), 1203–1255 (VTQA…TQEE), and 1491–1515 (KKGG…PRVH). A compositionally biased stretch (pro residues) spans 1217 to 1229 (PPVAERPLIPEPQ). One can recognise a BRCT 7 domain in the interval 1255–1347 (ETHRKVKKQY…RFVQEEDYEW (93 aa)). The Nuclear localization signal signature appears at 1510–1513 (KRPR).

This sequence belongs to the TOPBP1 family. In terms of assembly, interacts (via BRCT domains 1 and 2) with (phosphorylated) MDC1; promoting TOPBP1 recruitment to DNA damage sites during mitosis. Interacts (via BRCT domains 7 and 8) with (autophosphorylated) ATR; promoting activation of ATR. Interacts (via BRCT domains 7 and 8) with (phosphorylated) POLQ; specifically binds POLQ phosphorylated by PLK1, promoting POLQ recruitment to DNA damage sites. Interacts (via BRCT domains 1 and 2) with (phosphorylated) RAD9A. Interacts (via BRCT domain 2) with (phosphorylated) TP53BP1. Interacts (via BRCT domain 2) with (phosphorylated) HTATSF1. Interacts (via BRCT domains 7 and 8) with (phosphorylated) RAD51; promoting RAD51 recruitment to damaged chromatin. Interacts with CIP2A; forming the CIP2A-TOPBP1 complex. Interacts with POLE. Interacts with UBR5. Interacts with E2F1. Interacts with PML. Interacts with SMARCA2. Interacts with SMARCA4. Interacts with RHNO1. May interact with TOP2B. Interacts with TICRR. Interacts with HELB. In terms of processing, phosphorylated on serine and threonine residues in response to X-ray irradiation. Post-translationally, ubiquitinated and degraded by the proteasome. X-ray irradiation reduces ubiquitination. Deubiquitinated by USP13; leading to TOPBP1 stabilizion and activation of the ATR-TOPBP1 axis pathway. In terms of tissue distribution, highly expressed in testis.

It localises to the nucleus. The protein resides in the chromosome. It is found in the cytoplasm. Its subcellular location is the cytoskeleton. The protein localises to the microtubule organizing center. It localises to the centrosome. The protein resides in the spindle pole. Scaffold protein that acts as a key protein-protein adapter in DNA replication and DNA repair. Composed of multiple BRCT domains, which specifically recognize and bind phosphorylated proteins, bringing proteins together into functional combinations. Required for DNA replication initiation but not for the formation of pre-replicative complexes or the elongation stages. Necessary for the loading of replication factors onto chromatin, including GMNC, CDC45, DNA polymerases and components of the GINS complex. Plays a central role in DNA repair by bridging proteins and promoting recruitment of proteins to DNA damage sites. Involved in double-strand break (DSB) repair via homologous recombination in S-phase by promoting the exchange between the DNA replication factor A (RPA) complex and RAD51. Mechanistically, TOPBP1 is recruited to DNA damage sites in S-phase via interaction with phosphorylated HTATSF1, and promotes the loading of RAD51, thereby facilitating RAD51 nucleofilaments formation and RPA displacement, followed by homologous recombination. Involved in microhomology-mediated end-joining (MMEJ) DNA repair by promoting recruitment of polymerase theta (POLQ) to DNA damage sites during mitosis. MMEJ is an alternative non-homologous end-joining (NHEJ) machinery that takes place during mitosis to repair DSBs in DNA that originate in S-phase. Recognizes and binds POLQ phosphorylated by PLK1, enabling its recruitment to DSBs for subsequent repair. Involved in G1 DNA damage checkpoint by acting as a molecular adapter that couples TP53BP1 and the 9-1-1 complex. In response to DNA damage, triggers the recruitment of checkpoint signaling proteins on chromatin, which activate the CHEK1 signaling pathway and block S-phase progression. Acts as an activator of the kinase activity of ATR. Also required for chromosomal stability when DSBs occur during mitosis by forming filamentous assemblies that bridge MDC1 and tether broken chromosomes during mitosis. Together with CIP2A, plays an essential role in the response to genome instability generated by the presence of acentric chromosome fragments derived from shattered chromosomes within micronuclei. Micronuclei, which are frequently found in cancer cells, consist of chromatin surrounded by their own nuclear membrane: following breakdown of the micronuclear envelope, a process associated with chromothripsis, the CIP2A-TOPBP1 complex tethers chromosome fragments during mitosis to ensure clustered segregation of the fragments to a single daughter cell nucleus, facilitating re-ligation with limited chromosome scattering and loss. Recruits the SWI/SNF chromatin remodeling complex to E2F1-responsive promoters, thereby down-regulating E2F1 activity and inhibiting E2F1-dependent apoptosis during G1/S transition and after DNA damage. This Mus musculus (Mouse) protein is DNA topoisomerase 2-binding protein 1.